Reading from the N-terminus, the 481-residue chain is Thyroid receptor-interacting protein 6 (481 aa).

The segment covering 1 to 12 (MSGPTWLPPKQP) has biased composition (pro residues). Residues 1 to 259 (MSGPTWLPPK…QVPLSQPPEE (259 aa)) are disordered. The residue at position 25 (R25) is an Asymmetric dimethylarginine; alternate. An Omega-N-methylarginine; alternate modification is found at R25. The residue at position 55 (Y55) is a Phosphotyrosine; by SRC. S92 is modified (phosphoserine). Residues 108-122 (DGGRGHAPRRPDRQA) show a composition bias toward basic and acidic residues. R111 carries the post-translational modification Omega-N-methylarginine. Low complexity-rich tracts occupy residues 153 to 173 (SPYGAPTPASYATASTPAGPA) and 183 to 193 (PVRGCGPPRRG). Residues R185 and R192 each carry the omega-N-methylarginine modification. At S195 the chain carries Phosphoserine. Position 211 is an omega-N-methylarginine (R211). Over residues 221–233 (SHREPGPGVKEEA) the composition is skewed to basic and acidic residues. Omega-N-methylarginine is present on R243. A Phosphoserine modification is found at S254. LIM zinc-binding domains are found at residues 284–321 (CGGCGEDVVGDGAGVVALDRVFHVGCFVCSTCRAQLRG), 344–403 (CSTC…FAPR), and 404–472 (CSVC…RIQE). Residues 474–481 (SATVTTDC) form an interaction with MAGI1 and PTPN13 region.

The protein belongs to the zyxin/ajuba family. As to quaternary structure, specifically interacts with the ligand binding domain of the thyroid receptor (TR) in the presence of thyroid hormone. Interacts (via the third LIM domain and C-terminus) with PTPN13 (via the second PDZ domain). Interacts (via the second LIM domain or via the third LIM domain plus C-terminus) with PDLIM4 (via PDZ domain). Found in a complex with PTPN13 and PDLIM4. Interacts with SVIL isoform 2. Interacts with LPAR2 but not other LPA receptors. Interacts with PRKAA2. Interacts with MAGI1. Interacts with SCRIB. Phosphorylation at Tyr-55 by SRC is required for enhancement of lysophosphatidic acid-induced cell migration. Tyr-55 is dephosphorylated by PTPN13.

The protein localises to the cytoplasm. The protein resides in the cytoskeleton. Its subcellular location is the cell junction. It localises to the focal adhesion. It is found in the nucleus. Functionally, relays signals from the cell surface to the nucleus to weaken adherens junction and promote actin cytoskeleton reorganization and cell invasiveness. Involved in lysophosphatidic acid-induced cell adhesion and migration. Acts as a transcriptional coactivator for NF-kappa-B and JUN, and mediates the transrepression of these transcription factors induced by glucocorticoid receptor. The sequence is that of Thyroid receptor-interacting protein 6 (TRIP6) from Bos taurus (Bovine).